Consider the following 137-residue polypeptide: Cellular retinoic acid-binding protein 1 (137 aa).

Residues 21–31 carry the Nuclear localization signal motif; sequence KALGVNAMLRK. 132–134 serves as a coordination point for all-trans-retinoate; that stretch reads RIY.

This sequence belongs to the calycin superfamily. Fatty-acid binding protein (FABP) family.

Its subcellular location is the cytoplasm. Its function is as follows. Cytosolic CRABPs may regulate the access of retinoic acid to the nuclear retinoic acid receptors. The chain is Cellular retinoic acid-binding protein 1 (Crabp1) from Mus musculus (Mouse).